Here is a 296-residue protein sequence, read N- to C-terminus: 4-hydroxybenzoate octaprenyltransferase (296 aa).

8 helical membrane passes run 29–49, 55–75, 102–122, 146–166, 169–189, 219–239, 241–261, and 275–295; these read IGIY…ADGV, LLIF…INDF, AWIT…LTNA, YYPQ…AFTA, GELP…TVAY, LIIG…GNRF, LGLC…WEAW, and FLHN…DYAL.

Belongs to the UbiA prenyltransferase family. Requires Mg(2+) as cofactor.

It localises to the cell inner membrane. The catalysed reaction is all-trans-octaprenyl diphosphate + 4-hydroxybenzoate = 4-hydroxy-3-(all-trans-octaprenyl)benzoate + diphosphate. It functions in the pathway cofactor biosynthesis; ubiquinone biosynthesis. In terms of biological role, catalyzes the prenylation of para-hydroxybenzoate (PHB) with an all-trans polyprenyl group. Mediates the second step in the final reaction sequence of ubiquinone-8 (UQ-8) biosynthesis, which is the condensation of the polyisoprenoid side chain with PHB, generating the first membrane-bound Q intermediate 3-octaprenyl-4-hydroxybenzoate. In Pseudomonas aeruginosa (strain LESB58), this protein is 4-hydroxybenzoate octaprenyltransferase.